The sequence spans 148 residues: Snaclec stejaggregin-A subunit beta-3 (148 aa).

The first 23 residues, 1 to 23 (MGRFISVSFGLLVVFLSLSGAGA), serve as a signal peptide directing secretion. Residues Cys-27 and Cys-38 are joined by a disulfide bond. The 112-residue stretch at 34–145 (YDLYCYKVFK…CSRTHYVVCK (112 aa)) folds into the C-type lectin domain. Asn-47 and Asn-78 each carry an N-linked (GlcNAc...) asparagine glycan. Cystine bridges form between Cys-55/Cys-144 and Cys-121/Cys-136.

This sequence belongs to the snaclec family. As to quaternary structure, heteromultimer; disulfide-linked. Expressed by the venom gland.

It localises to the secreted. Functionally, interferes with one step of hemostasis (modulation of platelet aggregation, or coagulation cascade, for example). This chain is Snaclec stejaggregin-A subunit beta-3, found in Trimeresurus stejnegeri (Chinese green tree viper).